Reading from the N-terminus, the 226-residue chain is Urease accessory protein UreF (226 aa).

This sequence belongs to the UreF family. In terms of assembly, ureD, UreF and UreG form a complex that acts as a GTP-hydrolysis-dependent molecular chaperone, activating the urease apoprotein by helping to assemble the nickel containing metallocenter of UreC. The UreE protein probably delivers the nickel.

The protein resides in the cytoplasm. In terms of biological role, required for maturation of urease via the functional incorporation of the urease nickel metallocenter. This Burkholderia vietnamiensis (strain G4 / LMG 22486) (Burkholderia cepacia (strain R1808)) protein is Urease accessory protein UreF.